The sequence spans 3848 residues: Intermembrane lipid transfer protein tipC (3848 aa).

The Chorein N-terminal domain occupies His-4 to Leu-112. 12 disordered regions span residues Ile-243 to Glu-268, Leu-450 to Gly-481, Gln-966 to Leu-985, Lys-1174 to Ser-1219, Glu-1326 to Thr-1345, Glu-1907 to Thr-1926, Asp-2024 to Pro-2047, Ile-2209 to Leu-2290, Phe-2330 to Leu-2353, Lys-2509 to Gly-2541, Gly-3209 to Asp-3228, and Ile-3310 to Gln-3342. 2 stretches are compositionally biased toward low complexity: residues Gln-251–Gly-260 and Leu-452–Ser-477. A compositionally biased stretch (low complexity) spans Asn-1175–Asn-1190. Residues Ile-1191 to Ile-1200 show a composition bias toward polar residues. Pro residues predominate over residues Ser-1202 to Leu-1211. Low complexity predominate over residues Thr-1333–Thr-1345. Composition is skewed to low complexity over residues Asp-2029 to Asn-2044, Asn-2217 to Asn-2289, and Ser-2335 to Leu-2353. 2 stretches are compositionally biased toward low complexity: residues Asn-3212 to Asp-3228 and Asn-3311 to Gln-3342.

The protein belongs to the VPS13 family.

The protein localises to the membrane. Mediates the transfer of lipids between membranes at organelle contact sites. In Dictyostelium discoideum (Social amoeba), this protein is Intermembrane lipid transfer protein tipC (tipC).